The chain runs to 836 residues: MDEADFSEHTTYKQEDLPYDGDLSQIKIGNDYSFTSKKDGLEVLNQIIFIADDPQEKAMHSETCGNTAVTIPLGKITENAANKKDEKEKQCTAALHIPANEGDASKSSISDILLHHLSKEPFLRGQGIDCETLPEISNADSFEEEAIIKSIISCYNKNSWPKEQTPELTDQLNPKRDGENSNKPGSATTTEENTSDLEGPVAAGDSSHQENVNVLTKTKGPGDKQKSYQGQSPQKQQTEKANSGNTFKYGQGQVHYQLPDFSKIAPKVKIPKNKIINKPLAIAKQASFSSKSRDKPTLVQDSLETTPESNCVEKQHQEQKGKITEPSQQIQMEPIVHIHQELLTGIESEASLSKLSPTSQKGTSSSSSYIFQKISQGKQMCQKLKEQTDQLKTKVQEFSKRIKQDSPYHLQDKKLVLEKLQGHLELLEQNFLATKDKHLTLQQQVHKHESTIVGDFDPERKVEGEIFKLEMLLEDVKEKMDESKYTSAPSLPVSSPVTLDDLASTFSSLSNEIPKEHPGHPSGPRGSGGSEVTGTPQGGPQEAPNEELCELAPQTYLNGHYGDAAAQNKPDQVAMRLSSNSGEDPNGTPRRQDCAEMTAPSPSCAFCRRLLEWKQNVEKKGHGRINCGRFSIVLHEKAPHSDSTPNSDTGHSFCSDSGTEMQSNKCQDCGTKIPTSRRACRKEPTKEFHYRYNTPGQNYSNHSKRGAFVQPHSLDESKNSSPSFLKPKRICSQRVNSKSFKGEHEPTPGKKKLQAFMTYSSDPATPSPHFYSCRISGSKSLCDFDSTEEIKSEILNSALDHALRTATILKETTDQMIKTIAEDLAKAQRWRNRLKY.

Polar residues-rich tracts occupy residues 159–172 (SWPK…TDQL), 181–192 (SNKPGSATTTEE), and 227–248 (SYQG…NTFK). 2 disordered regions span residues 159 to 248 (SWPK…NTFK) and 303 to 325 (LETT…KITE). The segment covering 311-323 (CVEKQHQEQKGKI) has biased composition (basic and acidic residues). A coiled-coil region spans residues 372 to 484 (QKISQGKQMC…DVKEKMDESK (113 aa)). Disordered regions lie at residues 510–545 (SNEI…EAPN) and 575–596 (MRLS…DCAE).

It belongs to the AKNA family.

The sequence is that of Protein AKNAD1 (AKNAD1) from Homo sapiens (Human).